Consider the following 209-residue polypeptide: Outer-membrane lipoprotein carrier protein (209 aa).

The N-terminal stretch at 1–21 (MHRQLRYAVLATALFASTAFA) is a signal peptide.

Belongs to the LolA family. Monomer.

It is found in the periplasm. Its function is as follows. Participates in the translocation of lipoproteins from the inner membrane to the outer membrane. Only forms a complex with a lipoprotein if the residue after the N-terminal Cys is not an aspartate (The Asp acts as a targeting signal to indicate that the lipoprotein should stay in the inner membrane). The chain is Outer-membrane lipoprotein carrier protein from Xanthomonas axonopodis pv. citri (strain 306).